The following is a 203-amino-acid chain: Dephospho-CoA kinase (203 aa).

Positions 6–203 constitute a DPCK domain; it reads ILGLTGGIGS…FYLTLRGGRA (198 aa). 14–19 is a binding site for ATP; it reads GSGKSA.

Belongs to the CoaE family.

The protein resides in the cytoplasm. The enzyme catalyses 3'-dephospho-CoA + ATP = ADP + CoA + H(+). It functions in the pathway cofactor biosynthesis; coenzyme A biosynthesis; CoA from (R)-pantothenate: step 5/5. Functionally, catalyzes the phosphorylation of the 3'-hydroxyl group of dephosphocoenzyme A to form coenzyme A. This Pseudomonas aeruginosa (strain ATCC 15692 / DSM 22644 / CIP 104116 / JCM 14847 / LMG 12228 / 1C / PRS 101 / PAO1) protein is Dephospho-CoA kinase.